The following is a 626-amino-acid chain: Chaperone protein DnaK (626 aa).

Threonine 197 carries the post-translational modification Phosphothreonine; by autocatalysis. Over residues 595 to 614 (QNMAQQQQAQGGAQQQNQNK) the composition is skewed to low complexity. The disordered stretch occupies residues 595–626 (QNMAQQQQAQGGAQQQNQNKGGDDDVIDAEVE).

The protein belongs to the heat shock protein 70 family.

Functionally, acts as a chaperone. The chain is Chaperone protein DnaK from Nautilia profundicola (strain ATCC BAA-1463 / DSM 18972 / AmH).